Consider the following 127-residue polypeptide: Large ribosomal subunit protein bL19 (127 aa).

The protein belongs to the bacterial ribosomal protein bL19 family.

This protein is located at the 30S-50S ribosomal subunit interface and may play a role in the structure and function of the aminoacyl-tRNA binding site. In Myxococcus xanthus (strain DK1622), this protein is Large ribosomal subunit protein bL19.